Consider the following 941-residue polypeptide: MSIPTASLSPALAALIERAVARVRQSLPAWQVWPGGDFDRQLAQVALASDFALDTLARQPALLQHLAHPDPPPLPLPQLDPAQPQLWPAQLRRYRSAESTRLVWRDVLGLDSVEATLAGATRLAEHCMQCGLQALEQQFATRHGKVIADDGSVQRLVVFGLGKLGGGELNFSSDVDLVYAYPQGGQSDGARSLAAEEYFARLGQQLARLLDEATAEGFSHRVDLRLRPFGTAGRVALSFAGMDQYFQREGRDWERYAWLKARAVAGAIDAGEAWLETLRPFVYRRYLDFTALDGLREMKAAITAEVARHDCLDDIKRGPGGIREIEFLAQSLQLIRGGREPSLRERRLLPALRALVTAGQIDQENGQALTTAYRFLRRLENRLQMLRDAQTHALPQAPLDRERIALGLGYAEWATLLDALAPQRARVTAEFAELLAPRVRATAPDTLADYWRALPAGDAARLAGMGLSDPGGAHQALADFAHSSGVRGLSDSARARLDRVMPALLHAATRASQPDAAVPRMLGLLQATLRRTSYLSLLDEQPSALARLVDVLSRSALLAERLAAYPLLLDELLDTRISGPLPDRAALHAACADIVHIDDTEAALRELNERRLARSFRIALATLDGRQQAVESTRQLAWLAEAVVQTVLHLARTEMVAAHGYVSGGSFAIIGYGSLGGMELGFGSDLDLVFLYDHPPEVDASDGKRPLEAGRWFARLAQKVMALLAAETGAGRLYDIDVRLRPDGGKAALVSSLASYREYQRERAWTWEHQALVRARAVAGDAVLCDAFAQVRRYTLMRVRDTAQLHEDVRKMRARMRTELDRSDAGRLDLKQGAGGLVDLEFVLQAGVLGLAAQQPQLLDVCDTPALIDALVQVHWLPDDSAASLHQAHATLVDAGLSCTLDRRPRLIAPTPAIQQARGTIFNAARVQRLTFPLGKDEAAL.

An adenylyl removase region spans residues 1 to 437 (MSIPTASLSP…TAEFAELLAP (437 aa)). Residues 444–941 (PDTLADYWRA…FPLGKDEAAL (498 aa)) form an adenylyl transferase region.

It belongs to the GlnE family. It depends on Mg(2+) as a cofactor.

It catalyses the reaction [glutamine synthetase]-O(4)-(5'-adenylyl)-L-tyrosine + phosphate = [glutamine synthetase]-L-tyrosine + ADP. The enzyme catalyses [glutamine synthetase]-L-tyrosine + ATP = [glutamine synthetase]-O(4)-(5'-adenylyl)-L-tyrosine + diphosphate. Its function is as follows. Involved in the regulation of glutamine synthetase GlnA, a key enzyme in the process to assimilate ammonia. When cellular nitrogen levels are high, the C-terminal adenylyl transferase (AT) inactivates GlnA by covalent transfer of an adenylyl group from ATP to specific tyrosine residue of GlnA, thus reducing its activity. Conversely, when nitrogen levels are low, the N-terminal adenylyl removase (AR) activates GlnA by removing the adenylyl group by phosphorolysis, increasing its activity. The regulatory region of GlnE binds the signal transduction protein PII (GlnB) which indicates the nitrogen status of the cell. The protein is Bifunctional glutamine synthetase adenylyltransferase/adenylyl-removing enzyme of Xanthomonas oryzae pv. oryzae (strain MAFF 311018).